The sequence spans 533 residues: Probable lipid II flippase MurJ (533 aa).

Helical transmembrane passes span 11 to 31 (LANI…FGLL), 39 to 61 (AFGV…FLFI), 96 to 116 (LVSG…GIFI), 135 to 155 (LQIM…FGTL), 166 to 186 (ISPL…VWQL), 196 to 216 (WLLG…LQWL), 253 to 273 (LSSG…SFIP), 284 to 304 (FVAL…FLPV), 330 to 350 (LTMF…VQVI), 360 to 380 (AAAE…FYLG), 400 to 420 (VSLF…KPFG), 422 to 442 (VGIV…FIWM), 452 to 472 (LGGW…ASVA), and 493 to 513 (ILEV…GVAL).

This sequence belongs to the MurJ/MviN family.

It is found in the cell inner membrane. The protein operates within cell wall biogenesis; peptidoglycan biosynthesis. Its function is as follows. Involved in peptidoglycan biosynthesis. Transports lipid-linked peptidoglycan precursors from the inner to the outer leaflet of the cytoplasmic membrane. In Synechocystis sp. (strain ATCC 27184 / PCC 6803 / Kazusa), this protein is Probable lipid II flippase MurJ.